The chain runs to 875 residues: Alanine--tRNA ligase (875 aa).

Residues His564, His568, Cys666, and His670 each contribute to the Zn(2+) site.

Belongs to the class-II aminoacyl-tRNA synthetase family. As to quaternary structure, homotetramer. Zn(2+) serves as cofactor.

It localises to the cytoplasm. The catalysed reaction is tRNA(Ala) + L-alanine + ATP = L-alanyl-tRNA(Ala) + AMP + diphosphate. Catalyzes the attachment of alanine to tRNA(Ala) in a two-step reaction: alanine is first activated by ATP to form Ala-AMP and then transferred to the acceptor end of tRNA(Ala). Also edits incorrectly charged Ser-tRNA(Ala) and Gly-tRNA(Ala) via its editing domain. This Yersinia enterocolitica serotype O:8 / biotype 1B (strain NCTC 13174 / 8081) protein is Alanine--tRNA ligase.